We begin with the raw amino-acid sequence, 312 residues long: Homeobox-leucine zipper protein ATHB-5 (312 aa).

Residues 1-33 (MKRSRGSSDSLSGFLPIRHSTTDKQISPRPTTT) form a disordered region. Polar residues predominate over residues 23–33 (DKQISPRPTTT). Residues 69–128 (AAEKKRRLGVEQVKALEKNFEIDNKLEPERKVKLAQELGLQPRQVAIWFQNRRARWKTKQ) constitute a DNA-binding region (homeobox). Residues 129–164 (LERDYGVLKSNFDALKRNRDSLQRDNDSLLGQIKEL) are leucine-zipper.

Belongs to the HD-ZIP homeobox family. Class I subfamily. In terms of assembly, interacts with DNA as homodimer. Widely expressed.

Its subcellular location is the nucleus. Its function is as follows. Probable transcription factor that acts as a positive regulator of ABA-responsiveness, mediating the inhibitory effect of ABA on growth during seedling establishment. Binds to the DNA sequence 5'-CAATNATTG-3'. This is Homeobox-leucine zipper protein ATHB-5 (ATHB-5) from Arabidopsis thaliana (Mouse-ear cress).